A 695-amino-acid polypeptide reads, in one-letter code: Threonine--tRNA ligase 1, cytoplasmic (695 aa).

The interval 1-21 (MSEEKASSPSGKMDGEKPLNP) is disordered. The TGS domain maps to 51–115 (DSKPIKVTLP…ETDCTLELLK (65 aa)). K215 carries the post-translational modification N6-acetyllysine. The residue at position 218 (T218) is a Phosphothreonine. Position 270 is a phosphotyrosine (Y270). The residue at position 425 (T425) is a Phosphothreonine.

It belongs to the class-II aminoacyl-tRNA synthetase family. As to quaternary structure, homodimer. Post-translationally, ISGylated.

The protein resides in the cytoplasm. It catalyses the reaction tRNA(Thr) + L-threonine + ATP = L-threonyl-tRNA(Thr) + AMP + diphosphate + H(+). In terms of biological role, catalyzes the attachment of threonine to tRNA(Thr) in a two-step reaction: threonine is first activated by ATP to form Thr-AMP and then transferred to the acceptor end of tRNA(Thr). Also edits incorrectly charged tRNA(Thr) via its editing domain, at the post-transfer stage. The chain is Threonine--tRNA ligase 1, cytoplasmic (Tars1) from Rattus norvegicus (Rat).